Here is a 295-residue protein sequence, read N- to C-terminus: ATP synthase gamma chain (295 aa).

It belongs to the ATPase gamma chain family. In terms of assembly, F-type ATPases have 2 components, CF(1) - the catalytic core - and CF(0) - the membrane proton channel. CF(1) has five subunits: alpha(3), beta(3), gamma(1), delta(1), epsilon(1). CF(0) has three main subunits: a, b and c.

The protein resides in the cell inner membrane. Functionally, produces ATP from ADP in the presence of a proton gradient across the membrane. The gamma chain is believed to be important in regulating ATPase activity and the flow of protons through the CF(0) complex. This is ATP synthase gamma chain from Bdellovibrio bacteriovorus (strain ATCC 15356 / DSM 50701 / NCIMB 9529 / HD100).